The following is a 148-amino-acid chain: uncharacterized protein (148 aa).

In terms of domain architecture, N-acetyltransferase spans 1–144 (MNIKRITTEA…PHVLMTKEIS (144 aa)).

This is an uncharacterized protein from Bacillus subtilis (strain 168).